The sequence spans 293 residues: Protein orai (293 aa).

Topologically, residues 1-122 are cytoplasmic; the sequence is MPRSHDPSRV…RAQLKASSRT (122 aa). The interval 62-81 is disordered; that stretch reads STAGGGSRNGVGSKEGSVTS. Residues 123-141 traverse the membrane as a helical segment; the sequence is SALLAGFAMVCLVELQYDQ. Topologically, residues 142 to 146 are extracellular; it reads STPKP. Residues 147–167 form a helical membrane-spanning segment; that stretch reads LLIVLGVVTSLLVSVHLLALM. The Cytoplasmic segment spans residues 168 to 198; that stretch reads MSTCILPYMEATGCTQDSPHIKLKFYIDLSW. A helical membrane pass occupies residues 199-219; the sequence is LFSTCIGLLLFLVEIGVIFYV. Over 220–230 the chain is Extracellular; sequence KFTAVGYPTAG. A helical transmembrane segment spans residues 231–251; the sequence is YITTAMLVPVGVVFVVFSYLI. The Cytoplasmic segment spans residues 252–293; the sequence is HKNRVSHSLGRFKHKVDTMKQFLDVEANLQKSTLAPSTIRDI.

The protein belongs to the Orai family. Expressed in gonad sheath cells, hypodermis, intestine and spermatheca. Coexpressed with stim-1.

Its subcellular location is the membrane. Functionally, ca(2+) release-activated Ca(2+)-like (CRAC-like) channel subunit which mediates Ca(2+) influx and increase in Ca(2+)-selective current by synergy with the Ca(2+) sensor, stim-1. Required for Ca(2+) and IP3-dependent contractile activity of sheath cells and the spermatheca. Affects brood size and somatic cell function. This is Protein orai (orai-1) from Caenorhabditis elegans.